The following is a 233-amino-acid chain: Large ribosomal subunit protein uL22m (233 aa).

Belongs to the universal ribosomal protein uL22 family. In terms of assembly, component of the mitochondrial ribosome large subunit (39S) which comprises a 16S rRNA and about 50 distinct proteins.

The protein localises to the mitochondrion. This is Large ribosomal subunit protein uL22m (mRpL22) from Drosophila pseudoobscura pseudoobscura (Fruit fly).